Consider the following 206-residue polypeptide: Probable glutathione S-transferase 8 (206 aa).

The GST N-terminal domain maps to 2-79 (VHYKLSYFPI…FLARQFGING (78 aa)). Residues tyrosine 8, tryptophan 39, lysine 43, 49–51 (GQL), and 63–64 (QS) each bind glutathione. The region spanning 81-206 (CAWEEAQVNS…WLETRPETQF (126 aa)) is the GST C-terminal domain.

The protein belongs to the GST superfamily. Sigma family.

It catalyses the reaction RX + glutathione = an S-substituted glutathione + a halide anion + H(+). Functionally, conjugation of reduced glutathione to a wide number of exogenous and endogenous hydrophobic electrophiles. The chain is Probable glutathione S-transferase 8 (gst-8) from Caenorhabditis elegans.